We begin with the raw amino-acid sequence, 706 residues long: Cyclic nucleotide-gated channel alpha-3 (706 aa).

Topologically, residues 1-189 are cytoplasmic; it reads MAKISTQYSH…MDPSSNMYYH (189 aa). The segment at 113-177 is disordered; sequence RESHVQFNVG…PKKEEKKKDS (65 aa). Basic and acidic residues predominate over residues 147 to 177; that stretch reads SEKDDKAKKEEKEKKEEKKENPKKEEKKKDS. A helical membrane pass occupies residues 190–211; that stretch reads WLTVIAVPVFYNWCLLVCRACF. The Extracellular portion of the chain corresponds to 212–217; it reads DELQSE. A helical transmembrane segment spans residues 218–238; sequence HLMLWLVLDYSADILYGMDML. Residues 239–265 lie on the Cytoplasmic side of the membrane; the sequence is VRARTGFLEQGLMVMDASRLWKHYTQT. A helical transmembrane segment spans residues 266–285; it reads LHFKLDVLSLVPTDLAYFKL. Over 286 to 289 the chain is Extracellular; it reads GMNY. The helical transmembrane segment at 290–307 threads the bilayer; the sequence is PELRFNRLLKLARLFEFF. The Cytoplasmic segment spans residues 308-317; it reads DRTETRTNYP. Positions 317 to 425 are ion conduction pathway; sequence PNMFRIGNLV…GNVGSMISNM (109 aa). A helical membrane pass occupies residues 318–340; sequence NMFRIGNLVLYILIIIHWNACIY. The Extracellular segment spans residues 341–366; the sequence is FAISKFIGFGTDSWVYPNVSNPEYGR. Asparagine 358 carries N-linked (GalNAc...) asparagine glycosylation. The next 2 helical transmembrane spans lie at 367-397 and 398-422; these read LSRKYIYSLYWSTLTLTTIGETPPPVKDEEY and LFVVIDFLVGVLIFATIVGNVGSMI. Positions 384–387 are selectivity filter; sequence TIGE. Topologically, residues 423 to 706 are cytoplasmic; that stretch reads SNMNASRAEF…DAPQTEASQP (284 aa). Positions 427-504 are C-linker; the sequence is ASRAEFQAKI…TLRKVRIFQD (78 aa). The segment at 507 to 627 is cyclic nucleotide-binding domain; sequence AGLLVELVLK…EEKGRQILMK (121 aa). Residues glycine 567, glutamate 568, serine 570, arginine 583, threonine 584, and aspartate 628 each contribute to the 3',5'-cyclic GMP site. Residues 645–688 are a coiled coil; the sequence is IEEKVEHLETSLDSLQTRFARLLAEYNATQMKVKQRLSQLESQV. The interval 685–706 is disordered; the sequence is ESQVKMGLPPDGDAPQTEASQP.

The protein belongs to the cyclic nucleotide-gated cation channel (TC 1.A.1.5) family. CNGA3 subfamily. Forms heterotetrameric channels composed of CNGA3 and CNGB3 subunits with 3:1 stoichiometry. As to expression, testis, kidney, retinal cone (at protein level) and heart.

It is found in the cell membrane. The catalysed reaction is Ca(2+)(in) = Ca(2+)(out). The enzyme catalyses Na(+)(in) = Na(+)(out). It carries out the reaction K(+)(in) = K(+)(out). It catalyses the reaction NH4(+)(in) = NH4(+)(out). The catalysed reaction is Rb(+)(in) = Rb(+)(out). The enzyme catalyses Li(+)(in) = Li(+)(out). It carries out the reaction Cs(+)(in) = Cs(+)(out). With respect to regulation, ca(2+) influx is inhibited by extracellular Mg(2+) ions. Pore-forming subunit of the cone cyclic nucleotide-gated channel. Mediates cone photoresponses at bright light converting transient changes in intracellular cGMP levels into electrical signals. In the dark, cGMP levels are high and keep the channel open enabling a steady inward current carried by Na(+) and Ca(2+) ions that leads to membrane depolarization and neurotransmitter release from synaptic terminals. Upon photon absorption cGMP levels decline leading to channel closure and membrane hyperpolarization that ultimately slows neurotransmitter release and signals the presence of light, the end point of the phototransduction cascade. Pore-forming subunit of the gustatory cyclic nucleotide-gated channel. In the taste buds, may sense oral extracellular pH and conduct ion currents that modulate the excitability of taste cells. Conducts cGMP- and cAMP-gated ion currents, with permeability for monovalent and divalent cations. This Bos taurus (Bovine) protein is Cyclic nucleotide-gated channel alpha-3.